The primary structure comprises 235 residues: Exosome complex component Rrp4 (235 aa).

An S1 motif domain is found at 63–137; that stretch reads GDLVIGYVTD…DEYPIILTLK (75 aa). In terms of domain architecture, KH spans 147 to 203; it reads GTVVEITPVKVPRVIGKRGSMLNTLMELGCDIVVGQNGRIWVKCKDPRDEVFLASLI.

This sequence belongs to the RRP4 family. As to quaternary structure, component of the archaeal exosome complex. Forms a trimer of Rrp4 and/or Csl4 subunits. The trimer associates with a hexameric ring-like arrangement composed of 3 Rrp41-Rrp42 heterodimers.

It is found in the cytoplasm. In terms of biological role, non-catalytic component of the exosome, which is a complex involved in RNA degradation. Increases the RNA binding and the efficiency of RNA degradation. Confers strong poly(A) specificity to the exosome. This chain is Exosome complex component Rrp4, found in Pyrobaculum aerophilum (strain ATCC 51768 / DSM 7523 / JCM 9630 / CIP 104966 / NBRC 100827 / IM2).